Here is a 348-residue protein sequence, read N- to C-terminus: (+)-germacrene D synthase (348 aa).

Residues Asp97, Asp101, Asn242, and Ser246 each contribute to the Mg(2+) site. A DDXXD motif motif is present at residues 97-101 (DDILD).

This sequence belongs to the terpene synthase family. Requires Mg(2+) as cofactor.

It catalyses the reaction (2E,6E)-farnesyl diphosphate = (+)-germacrene D + diphosphate. It functions in the pathway secondary metabolite biosynthesis; terpenoid biosynthesis. Functionally, sesquiterpene synthase converting farnesyl diphosphate to eight sesquiterpenes, with (+)-germacrene D and an unidentified oxygenated sesquiterpene as the major products. Has no diterpene synthase activity. The protein is (+)-germacrene D synthase of Selaginella moellendorffii (Spikemoss).